A 127-amino-acid polypeptide reads, in one-letter code: Small ribosomal subunit protein uS11 (127 aa).

Belongs to the universal ribosomal protein uS11 family. In terms of assembly, part of the 30S ribosomal subunit. Interacts with proteins S7 and S18. Binds to IF-3.

Functionally, located on the platform of the 30S subunit, it bridges several disparate RNA helices of the 16S rRNA. Forms part of the Shine-Dalgarno cleft in the 70S ribosome. This chain is Small ribosomal subunit protein uS11, found in Anaeromyxobacter dehalogenans (strain 2CP-C).